We begin with the raw amino-acid sequence, 437 residues long: Transcription factor AP-2-alpha (437 aa).

Lys10 participates in a covalent cross-link: Glycyl lysine isopeptide (Lys-Gly) (interchain with G-Cter in SUMO); alternate. Lys10 is covalently cross-linked (Glycyl lysine isopeptide (Lys-Gly) (interchain with G-Cter in SUMO2); alternate). A disordered region spans residues 14–107; it reads CEDRHDGTSN…GQRQSQESGL (94 aa). The short motif at 57–62 is the PPxY motif element; that stretch reads YFPPPY. 2 stretches are compositionally biased toward low complexity: residues 65 to 74 and 88 to 101; these read IYPQSQDPYS and QPQPQHPGWPGQRQ. Glycyl lysine isopeptide (Lys-Gly) (interchain with G-Cter in SUMO2) cross-links involve residues Lys177 and Lys184. Position 239 is a phosphoserine; by PKA (Ser239). Positions 280–410 are H-S-H (helix-span-helix), dimerization; that stretch reads RRKAANVTLL…YLTEALKAMD (131 aa). The span at 414–427 shows a compositional bias: polar residues; the sequence is LSNNPNSHTDNNAK. Positions 414-437 are disordered; the sequence is LSNNPNSHTDNNAKSSDKEEKHRK. Basic and acidic residues predominate over residues 428–437; it reads SSDKEEKHRK.

The protein belongs to the AP-2 family. As to quaternary structure, binds DNA as a dimer. Can form homodimers or heterodimers with other AP-2 family members. Interacts with WWOX. Interacts with CITED4. Interacts with UBE2I. Interacts with RALBP1 in a complex also containing EPN1 and NUMB during interphase and mitosis. Interacts with KCTD1; this interaction represses transcription activation. Interacts (via C-terminus) with CITED2 (via C-terminus); the interaction stimulates TFAP2A-transcriptional activation. Interacts (via N-terminus) with EP300 (via N-terminus); the interaction requires CITED2. Interacts with KCTD15; this interaction inhibits TFAP2A transcriptional activation. In terms of processing, sumoylated on Lys-10; which inhibits transcriptional activity.

The protein resides in the nucleus. Functionally, sequence-specific DNA-binding protein that interacts with inducible viral and cellular enhancer elements to regulate transcription of selected genes. AP-2 factors bind to the consensus sequence 5'-GCCNNNGGC-3' and activate genes involved in a large spectrum of important biological functions including proper eye, face, body wall, limb and neural tube development. They also suppress a number of genes including MCAM/MUC18, C/EBP alpha and MYC. AP-2-alpha is the only AP-2 protein required for early morphogenesis of the lens vesicle. Together with the CITED2 coactivator, stimulates the PITX2 P1 promoter transcription activation. Associates with chromatin to the PITX2 P1 promoter region. This chain is Transcription factor AP-2-alpha (TFAP2A), found in Homo sapiens (Human).